A 422-amino-acid chain; its full sequence is Serine hydroxymethyltransferase 2 (422 aa).

Residues L121 and 125–127 contribute to the (6S)-5,6,7,8-tetrahydrofolate site; that span reads GHL. K230 bears the N6-(pyridoxal phosphate)lysine mark.

Belongs to the SHMT family. Homodimer. Pyridoxal 5'-phosphate serves as cofactor.

The protein localises to the cytoplasm. The enzyme catalyses (6R)-5,10-methylene-5,6,7,8-tetrahydrofolate + glycine + H2O = (6S)-5,6,7,8-tetrahydrofolate + L-serine. It participates in one-carbon metabolism; tetrahydrofolate interconversion. The protein operates within amino-acid biosynthesis; glycine biosynthesis; glycine from L-serine: step 1/1. Its function is as follows. Catalyzes the reversible interconversion of serine and glycine with tetrahydrofolate (THF) serving as the one-carbon carrier. This reaction serves as the major source of one-carbon groups required for the biosynthesis of purines, thymidylate, methionine, and other important biomolecules. Also exhibits THF-independent aldolase activity toward beta-hydroxyamino acids, producing glycine and aldehydes, via a retro-aldol mechanism. The sequence is that of Serine hydroxymethyltransferase 2 from Agrobacterium fabrum (strain C58 / ATCC 33970) (Agrobacterium tumefaciens (strain C58)).